We begin with the raw amino-acid sequence, 249 residues long: LexA repressor (249 aa).

A disordered region spans residues 1–26 (MAAQATGGRATQRSQQSPAKPKGLTV). Residues 9–18 (RATQRSQQSP) show a composition bias toward polar residues. Residues 48–68 (MREIGDTVGLASLSSVTHQLS) constitute a DNA-binding region (H-T-H motif). Catalysis depends on for autocatalytic cleavage activity residues Ser-173 and Lys-210.

Belongs to the peptidase S24 family. In terms of assembly, homodimer.

It carries out the reaction Hydrolysis of Ala-|-Gly bond in repressor LexA.. Represses a number of genes involved in the response to DNA damage (SOS response), including recA and lexA. In the presence of single-stranded DNA, RecA interacts with LexA causing an autocatalytic cleavage which disrupts the DNA-binding part of LexA, leading to derepression of the SOS regulon and eventually DNA repair. The protein is LexA repressor of Arthrobacter sp. (strain FB24).